Consider the following 246-residue polypeptide: 3-deoxy-manno-octulosonate cytidylyltransferase (246 aa).

Belongs to the KdsB family.

The protein localises to the cytoplasm. It carries out the reaction 3-deoxy-alpha-D-manno-oct-2-ulosonate + CTP = CMP-3-deoxy-beta-D-manno-octulosonate + diphosphate. The protein operates within nucleotide-sugar biosynthesis; CMP-3-deoxy-D-manno-octulosonate biosynthesis; CMP-3-deoxy-D-manno-octulosonate from 3-deoxy-D-manno-octulosonate and CTP: step 1/1. It participates in bacterial outer membrane biogenesis; lipopolysaccharide biosynthesis. Functionally, activates KDO (a required 8-carbon sugar) for incorporation into bacterial lipopolysaccharide in Gram-negative bacteria. The sequence is that of 3-deoxy-manno-octulosonate cytidylyltransferase from Bradyrhizobium sp. (strain BTAi1 / ATCC BAA-1182).